Reading from the N-terminus, the 347-residue chain is Ribosomal RNA large subunit methyltransferase M (347 aa).

Residues Ser-184, 217–220 (APGG), Asp-236, Asp-256, and Asp-272 each bind S-adenosyl-L-methionine. The Proton acceptor role is filled by Lys-301.

Belongs to the class I-like SAM-binding methyltransferase superfamily. RNA methyltransferase RlmE family. RlmM subfamily. As to quaternary structure, monomer.

It is found in the cytoplasm. It catalyses the reaction cytidine(2498) in 23S rRNA + S-adenosyl-L-methionine = 2'-O-methylcytidine(2498) in 23S rRNA + S-adenosyl-L-homocysteine + H(+). Catalyzes the 2'-O-methylation at nucleotide C2498 in 23S rRNA. The chain is Ribosomal RNA large subunit methyltransferase M from Xanthomonas oryzae pv. oryzae (strain MAFF 311018).